We begin with the raw amino-acid sequence, 369 residues long: Probable peptidoglycan glycosyltransferase FtsW (369 aa).

A run of 8 helical transmembrane segments spans residues 11–31 (LLSV…SSSV), 48–68 (NFIH…VPIY), 77–97 (LILC…SNHG), 134–151 (TSTI…KLLL), 154–174 (PDFG…FLIG), 177–197 (FLFL…LIYF), 265–285 (LGYL…FQGM), and 306–326 (ISLL…GILP).

It belongs to the SEDS family. FtsW subfamily.

The protein resides in the cell inner membrane. It carries out the reaction [GlcNAc-(1-&gt;4)-Mur2Ac(oyl-L-Ala-gamma-D-Glu-L-Lys-D-Ala-D-Ala)](n)-di-trans,octa-cis-undecaprenyl diphosphate + beta-D-GlcNAc-(1-&gt;4)-Mur2Ac(oyl-L-Ala-gamma-D-Glu-L-Lys-D-Ala-D-Ala)-di-trans,octa-cis-undecaprenyl diphosphate = [GlcNAc-(1-&gt;4)-Mur2Ac(oyl-L-Ala-gamma-D-Glu-L-Lys-D-Ala-D-Ala)](n+1)-di-trans,octa-cis-undecaprenyl diphosphate + di-trans,octa-cis-undecaprenyl diphosphate + H(+). Its pathway is cell wall biogenesis; peptidoglycan biosynthesis. Peptidoglycan polymerase that is essential for cell division. This chain is Probable peptidoglycan glycosyltransferase FtsW, found in Riesia pediculicola (strain USDA).